Here is a 212-residue protein sequence, read N- to C-terminus: uncharacterized protein (212 aa).

This is an uncharacterized protein from Dryophytes versicolor (chameleon treefrog).